Reading from the N-terminus, the 263-residue chain is Small ribosomal subunit protein uS3 (263 aa).

In terms of domain architecture, KH type-2 spans 39 to 107 (VREYLKKKLK…PVHVNIEEIR (69 aa)). The segment at 211–263 (GELPPEAATPREEERRPRRAPRGDRPDGARTGRPGGRGRGPRKADAAPAPEGE) is disordered. Residues 219 to 240 (TPREEERRPRRAPRGDRPDGAR) show a composition bias toward basic and acidic residues.

Belongs to the universal ribosomal protein uS3 family. Part of the 30S ribosomal subunit. Forms a tight complex with proteins S10 and S14.

Binds the lower part of the 30S subunit head. Binds mRNA in the 70S ribosome, positioning it for translation. In Bordetella pertussis (strain Tohama I / ATCC BAA-589 / NCTC 13251), this protein is Small ribosomal subunit protein uS3.